The following is a 439-amino-acid chain: Homogentisate 1,2-dioxygenase (439 aa).

His293 (proton acceptor) is an active-site residue. Fe cation is bound by residues His336 and Glu342. 2 residues coordinate homogentisate: Tyr351 and His372. His372 serves as a coordination point for Fe cation.

It belongs to the homogentisate dioxygenase family. As to quaternary structure, hexamer; dimer of trimers. It depends on Fe cation as a cofactor.

It catalyses the reaction homogentisate + O2 = 4-maleylacetoacetate + H(+). It functions in the pathway amino-acid degradation; L-phenylalanine degradation; acetoacetate and fumarate from L-phenylalanine: step 4/6. Functionally, involved in the catabolism of homogentisate (2,5-dihydroxyphenylacetate or 2,5-OH-PhAc), a central intermediate in the degradation of phenylalanine and tyrosine. Catalyzes the oxidative ring cleavage of the aromatic ring of homogentisate to yield maleylacetoacetate. The chain is Homogentisate 1,2-dioxygenase from Cupriavidus pinatubonensis (strain JMP 134 / LMG 1197) (Cupriavidus necator (strain JMP 134)).